The chain runs to 462 residues: Fumarate hydratase class II (462 aa).

Substrate-binding positions include 97-99 (SGT), 127-130 (HPND), 137-139 (SSN), and threonine 185. Histidine 186 (proton donor/acceptor) is an active-site residue. Serine 316 is an active-site residue. Substrate contacts are provided by residues serine 317 and 322–324 (KVN).

It belongs to the class-II fumarase/aspartase family. Fumarase subfamily. In terms of assembly, homotetramer.

It localises to the cytoplasm. It carries out the reaction (S)-malate = fumarate + H2O. It functions in the pathway carbohydrate metabolism; tricarboxylic acid cycle; (S)-malate from fumarate: step 1/1. Functionally, involved in the TCA cycle. Catalyzes the stereospecific interconversion of fumarate to L-malate. In Bacillus subtilis (strain 168), this protein is Fumarate hydratase class II.